The following is a 521-amino-acid chain: Maturase K (521 aa).

The protein belongs to the intron maturase 2 family. MatK subfamily.

It is found in the plastid. In terms of biological role, usually encoded in the trnK tRNA gene intron. Probably assists in splicing its own and other chloroplast group II introns. This chain is Maturase K, found in Cuscuta exaltata (Tall dodder).